An 864-amino-acid polypeptide reads, in one-letter code: Paramyosin (864 aa).

Residues 1–30 (MSSLYRDLDSDVSSTRIVRHSYNVYRGSSP) form a nonhelical region region. Residues 31–853 (SSQNRLESRI…QTVRRSRSMS (823 aa)) adopt a coiled-coil conformation. A nonhelical region region spans residues 854 to 864 (VSREVTRVVRV).

The protein belongs to the paramyosin family. As to quaternary structure, homodimer. In terms of processing, phosphorylated. In terms of tissue distribution, most abundantly expressed in muscle tissues from byssus retractor and adductor muscles. Low expression in foot, gill, inner mantle and outer mantle.

It is found in the cytoplasm. It localises to the myofibril. Its function is as follows. Paramyosin is a major structural component of many thick filaments isolated from invertebrate muscles. This is Paramyosin from Mytilus galloprovincialis (Mediterranean mussel).